A 343-amino-acid chain; its full sequence is Glyceraldehyde-3-phosphate dehydrogenase (343 aa).

NAD(+) contacts are provided by residues 13–14 and glycine 112; that span reads TI. A D-glyceraldehyde 3-phosphate-binding site is contributed by 141–143; that stretch reads SCN. Cysteine 142 functions as the Nucleophile in the catalytic mechanism. Position 170 (arginine 170) interacts with NAD(+). 196–197 contacts D-glyceraldehyde 3-phosphate; it reads HA. Glutamine 303 provides a ligand contact to NAD(+).

Belongs to the glyceraldehyde-3-phosphate dehydrogenase family. As to quaternary structure, homotetramer.

It is found in the cytoplasm. It catalyses the reaction D-glyceraldehyde 3-phosphate + phosphate + NADP(+) = (2R)-3-phospho-glyceroyl phosphate + NADPH + H(+). The catalysed reaction is D-glyceraldehyde 3-phosphate + phosphate + NAD(+) = (2R)-3-phospho-glyceroyl phosphate + NADH + H(+). The protein operates within carbohydrate degradation; glycolysis; pyruvate from D-glyceraldehyde 3-phosphate: step 1/5. The chain is Glyceraldehyde-3-phosphate dehydrogenase (gap) from Aeropyrum pernix (strain ATCC 700893 / DSM 11879 / JCM 9820 / NBRC 100138 / K1).